Reading from the N-terminus, the 563-residue chain is Coiled-coil domain-containing protein 63 (563 aa).

The interval 1–29 (MSVLKKNRRKDSDTPQEPSEKAKEQQAEA) is disordered. The segment covering 10–29 (KDSDTPQEPSEKAKEQQAEA) has biased composition (basic and acidic residues). Coiled coils occupy residues 18-201 (PSEK…QLQH), 233-291 (AMKD…AKKH), and 341-422 (TELN…KKIN).

In terms of biological role, plays a role in spermiogenesis. Involved in the elongation of flagella and the formation of sperm heads. In Homo sapiens (Human), this protein is Coiled-coil domain-containing protein 63.